The chain runs to 251 residues: Flap endonuclease Xni (251 aa).

A Mg(2+)-binding site is contributed by Asp104. In terms of domain architecture, 5'-3' exonuclease spans 160-249 (VLPRQLPDYW…IDGNLQQLRL (90 aa)). K(+) is bound by residues Leu171, Ala172, Pro180, Val182, and Ile185. Residues 184 to 189 (GIGPKS) form an interaction with DNA region.

Belongs to the Xni family. Requires Mg(2+) as cofactor. K(+) is required as a cofactor.

Functionally, has flap endonuclease activity. During DNA replication, flap endonucleases cleave the 5'-overhanging flap structure that is generated by displacement synthesis when DNA polymerase encounters the 5'-end of a downstream Okazaki fragment. This Salmonella typhimurium (strain LT2 / SGSC1412 / ATCC 700720) protein is Flap endonuclease Xni.